Here is a 382-residue protein sequence, read N- to C-terminus: MKITKITTYRLPPRWMFLKIETDEGVVGWGEPVIEGRARTVEAAVHELSDYLIGQDPSRINDLWQVMYRAGFYRGGPILMSAIAGIDQALWDIKGKVLNAPVWQLMGGLVRDKIKAYSWVGGDRPADVIDGIKTLREIGFDTFKLNGCEELGLIDNSRAVDAAVNTVAQIREAFGNQIEFGLDFHGRVSAPMAKVLIKELEPYRPLFIEEPVLAEQAEYYPKLAAQTHIPLAAGERMFSRFDFKRVLEAGGISILQPDLSHAGGITECYKIAGMAEAYDVTLAPHCPLGPIALAACLHIDFVSYNAVLQEQSMGIHYNKGAELLDFVKNKEDFSMVGGFFKPLMKPGLGVEIDEAKVIEFSKNAPDWRNPLWRHEDNSVAEW.

Mg(2+) is bound at residue Asp183. The active-site Proton donor is the His185. Residues Glu209 and Glu235 each coordinate Mg(2+). His285 acts as the Proton acceptor in catalysis.

This sequence belongs to the mandelate racemase/muconate lactonizing enzyme family. GalD subfamily. Mg(2+) serves as cofactor.

The enzyme catalyses D-galactonate = 2-dehydro-3-deoxy-D-galactonate + H2O. It functions in the pathway carbohydrate acid metabolism; D-galactonate degradation; D-glyceraldehyde 3-phosphate and pyruvate from D-galactonate: step 1/3. Functionally, catalyzes the dehydration of D-galactonate to 2-keto-3-deoxy-D-galactonate. This Escherichia fergusonii (strain ATCC 35469 / DSM 13698 / CCUG 18766 / IAM 14443 / JCM 21226 / LMG 7866 / NBRC 102419 / NCTC 12128 / CDC 0568-73) protein is D-galactonate dehydratase.